Here is a 244-residue protein sequence, read N- to C-terminus: Acetoacetate decarboxylase (244 aa).

Lys115 (schiff-base intermediate with acetoacetate) is an active-site residue.

Belongs to the ADC family. As to quaternary structure, homododecamer.

It carries out the reaction acetoacetate + H(+) = acetone + CO2. Its function is as follows. Catalyzes the conversion of acetoacetate to acetone and carbon dioxide. The sequence is that of Acetoacetate decarboxylase from Clostridium acetobutylicum (strain ATCC 824 / DSM 792 / JCM 1419 / IAM 19013 / LMG 5710 / NBRC 13948 / NRRL B-527 / VKM B-1787 / 2291 / W).